Reading from the N-terminus, the 175-residue chain is NADH-quinone oxidoreductase subunit B (175 aa).

Residues Cys54, Cys55, Cys119, and Cys149 each coordinate [4Fe-4S] cluster.

It belongs to the complex I 20 kDa subunit family. NDH-1 is composed of at least 14 different subunits, Nqo1 to Nqo14. The complex has a L-shaped structure, with the hydrophobic arm (subunits Nqo7, Nqo8, Nqo10 to Nqo14) embedded in the inner membrane and the hydrophilic peripheral arm (subunits Nqo1 to Nqo6, Nqo9) protruding into the bacterial cytoplasm. The hydrophilic domain contains all the redox centers. NADH-quinone oxidoreductase forms a supercomplex with ubiquinol-cytochrome c reductase complex (complex III or cytochrome b-c1 complex) and cytochrome c oxidase (complex IV), which stabilizes the NADH-quinone oxidoreductase complex. [4Fe-4S] cluster is required as a cofactor.

The protein resides in the cell inner membrane. The catalysed reaction is a quinone + NADH + 5 H(+)(in) = a quinol + NAD(+) + 4 H(+)(out). Functionally, NDH-1 shuttles electrons from NADH, via FMN and iron-sulfur (Fe-S) centers, to quinones in the respiratory chain. The immediate electron acceptor for the enzyme in this species is believed to be ubiquinone. Couples the redox reaction to proton translocation (for every two electrons transferred, four hydrogen ions are translocated across the cytoplasmic membrane), and thus conserves the redox energy in a proton gradient. In Paracoccus denitrificans (strain Pd 1222), this protein is NADH-quinone oxidoreductase subunit B.